We begin with the raw amino-acid sequence, 285 residues long: (3S)-malyl-CoA thioesterase (285 aa).

Substrate-binding residues include Arg70 and Glu122. Mg(2+)-binding residues include Glu122 and Asp148.

The protein belongs to the HpcH/HpaI aldolase family. As to quaternary structure, homodimer or homotrimer. It depends on Mg(2+) as a cofactor.

The catalysed reaction is (S)-malyl-CoA + H2O = (S)-malate + CoA + H(+). Its function is as follows. Catalyzes the hydrolysis of (3S)-malyl-CoA to (3S)-malate and free CoA. Inactive towards beta-methylmalyl-CoA and other CoA esters. This Cereibacter sphaeroides (strain KD131 / KCTC 12085) (Rhodobacter sphaeroides) protein is (3S)-malyl-CoA thioesterase.